The chain runs to 390 residues: Ribosomal RNA small subunit methyltransferase H (390 aa).

Residues 47–49, aspartate 66, phenylalanine 93, aspartate 122, and glutamine 129 each bind S-adenosyl-L-methionine; that span reads GGH. The segment at 282–390 is disordered; that stretch reads SKTPPGLPID…SHREDVEGEQ (109 aa). The span at 305–316 shows a compositional bias: basic and acidic residues; sequence GSEKADEQENNK. Residues 348–358 are compositionally biased toward polar residues; that stretch reads SGSSTTYSARS. 2 stretches are compositionally biased toward basic and acidic residues: residues 360–372 and 381–390; these read SRHE…REHL and SHREDVEGEQ.

Belongs to the methyltransferase superfamily. RsmH family.

Its subcellular location is the cytoplasm. It carries out the reaction cytidine(1402) in 16S rRNA + S-adenosyl-L-methionine = N(4)-methylcytidine(1402) in 16S rRNA + S-adenosyl-L-homocysteine + H(+). Specifically methylates the N4 position of cytidine in position 1402 (C1402) of 16S rRNA. The sequence is that of Ribosomal RNA small subunit methyltransferase H from Corynebacterium kroppenstedtii (strain DSM 44385 / JCM 11950 / CIP 105744 / CCUG 35717).